Reading from the N-terminus, the 1335-residue chain is Membrane-associated phosphatidylinositol transfer protein 2 (1335 aa).

Disordered regions lie at residues 32–51 (ETHG…YTDG) and 262–341 (EEGP…SEEE). The segment covering 275 to 286 (KDQASGTTSDPG) has biased composition (polar residues). A compositionally biased stretch (low complexity) spans 299–319 (KQWSTSSKSSRSSKRGASPSR). A phosphoserine mark is found at serine 334, serine 338, serine 365, and serine 586. Positions 606–657 (HCSGGSGGGGSGGSSLESSRHLSRSNIDIPRSNGTEDSRRQLPRKRSDSSTY) are disordered. Gly residues predominate over residues 609-618 (GGSGGGGSGG). Serine 630 bears the Phosphoserine mark. The span at 639–653 (GTEDSRRQLPRKRSD) shows a compositional bias: basic and acidic residues. A phosphoserine mark is found at serine 686, serine 687, and serine 688. Residues 701–949 (FDFEIADLFL…VSFLLRQVMR (249 aa)) enclose the DDHD domain. Arginine 814 is subject to Omega-N-methylarginine. Residues 861–880 (ALPPPSPTTQGPRARARQVS) are disordered. Serine 1263 carries the phosphoserine modification. The tract at residues 1282-1313 (TISAQPSGPSHRHDRTQTQMDSEQRGQRSMSV) is disordered. Over residues 1298 to 1313 (QTQMDSEQRGQRSMSV) the composition is skewed to polar residues.

Belongs to the PtdIns transfer protein family. PI transfer class IIA subfamily. Interacts with CPNE4 (via VWFA domain). Interacts with PTK2B via its C-terminus. As to expression, detected in retina and in the dentate gyrus of the cerebellum.

Its subcellular location is the endomembrane system. It is found in the cytoplasm. The protein localises to the cytoskeleton. Catalyzes the transfer of phosphatidylinositol and phosphatidylcholine between membranes (in vitro). Binds calcium ions. This is Membrane-associated phosphatidylinositol transfer protein 2 (Pitpnm2) from Mus musculus (Mouse).